A 118-amino-acid polypeptide reads, in one-letter code: Ribonuclease P protein component (118 aa).

This sequence belongs to the RnpA family. Consists of a catalytic RNA component (M1 or rnpB) and a protein subunit.

It carries out the reaction Endonucleolytic cleavage of RNA, removing 5'-extranucleotides from tRNA precursor.. In terms of biological role, RNaseP catalyzes the removal of the 5'-leader sequence from pre-tRNA to produce the mature 5'-terminus. It can also cleave other RNA substrates such as 4.5S RNA. The protein component plays an auxiliary but essential role in vivo by binding to the 5'-leader sequence and broadening the substrate specificity of the ribozyme. In Shewanella putrefaciens (strain CN-32 / ATCC BAA-453), this protein is Ribonuclease P protein component.